A 417-amino-acid chain; its full sequence is Putative F-box protein At4g21240 (417 aa).

Over residues 1–12 the composition is skewed to acidic residues; it reads MDRREEEEEETG. Residues 1 to 25 are disordered; that stretch reads MDRREEEEEETGYGEKGTRNQSKED. Positions 16–25 are enriched in basic and acidic residues; sequence KGTRNQSKED. The region spanning 30 to 76 is the F-box domain; that stretch reads GKIFELIPLDMIPDILLRLPAKSAVRFRIVSKLWLSITTRPYFIRSF.

The chain is Putative F-box protein At4g21240 from Arabidopsis thaliana (Mouse-ear cress).